The primary structure comprises 431 residues: UDP-N-acetylglucosamine 1-carboxyvinyltransferase (431 aa).

Residue 24-25 participates in phosphoenolpyruvate binding; it reads KN. Arginine 95 contributes to the UDP-N-acetyl-alpha-D-glucosamine binding site. The active-site Proton donor is aspartate 119. UDP-N-acetyl-alpha-D-glucosamine contacts are provided by aspartate 314 and methionine 336.

Belongs to the EPSP synthase family. MurA subfamily.

The protein localises to the cytoplasm. The catalysed reaction is phosphoenolpyruvate + UDP-N-acetyl-alpha-D-glucosamine = UDP-N-acetyl-3-O-(1-carboxyvinyl)-alpha-D-glucosamine + phosphate. It participates in cell wall biogenesis; peptidoglycan biosynthesis. Functionally, cell wall formation. Adds enolpyruvyl to UDP-N-acetylglucosamine. This Bradyrhizobium diazoefficiens (strain JCM 10833 / BCRC 13528 / IAM 13628 / NBRC 14792 / USDA 110) protein is UDP-N-acetylglucosamine 1-carboxyvinyltransferase.